Here is a 269-residue protein sequence, read N- to C-terminus: CUE domain-containing protein 2-B (269 aa).

Positions 110–130 (ASPSEKTATEPLEGAVAQDKD) are disordered. In terms of domain architecture, CUE spans 131–174 (DPKTGVDLLLEIFPSCTITQAQTALSMAKGDLEDAVQIIVDGKV).

Belongs to the CUEDC2 family. Post-translationally, phosphorylated.

Its subcellular location is the cytoplasm. The protein localises to the nucleus. In terms of biological role, may play a role in targeting proteins for ubiquitination and subsequent proteasomal degradation. The sequence is that of CUE domain-containing protein 2-B (cuedc2-b) from Xenopus laevis (African clawed frog).